We begin with the raw amino-acid sequence, 422 residues long: UDP-N-acetyl-D-glucosamine 6-dehydrogenase (422 aa).

5 residues coordinate NAD(+): valine 14, aspartate 32, arginine 37, threonine 83, and threonine 118. The active-site Nucleophile is the cysteine 258. Residue arginine 329 coordinates NAD(+).

It belongs to the UDP-glucose/GDP-mannose dehydrogenase family.

The catalysed reaction is UDP-N-acetyl-alpha-D-glucosamine + 2 NAD(+) + H2O = UDP-2-acetamido-2-deoxy-alpha-D-glucuronate + 2 NADH + 3 H(+). The protein operates within bacterial outer membrane biogenesis; LPS O-antigen biosynthesis. Its activity is regulated as follows. Requires either potassium or ammonium-containing salts for activity. In terms of biological role, dehydrogenase required for the biosynthesis of the B-band O antigen of serotype O6 lipopolysaccharide. Is also required for flagellin glycosylation. Catalyzes the conversion of UDP-N-acetylglucosamine (UDP-GlcNAc) to UDP-N-acetylglucosaminuronic acid (UDP-GlcNAcA). Can also catalyze the conversion of UDP-N-acetyl-galactosamine (UDP-GalNAc) to UDP-N-acetylgalactosaminuronic acid (UDP-GalNAcA), with low efficiency. Can use NAD(+) or NADP(+), with a preference for NAD(+). This chain is UDP-N-acetyl-D-glucosamine 6-dehydrogenase, found in Pseudomonas aeruginosa.